The sequence spans 33 residues: Cytochrome b6-f complex subunit 8 (33 aa).

The helical transmembrane segment at 2–22 (LFTIAWASLAAVFSFSIAMVV) threads the bilayer.

This sequence belongs to the PetN family. In terms of assembly, the 4 large subunits of the cytochrome b6-f complex are cytochrome b6, subunit IV (17 kDa polypeptide, PetD), cytochrome f and the Rieske protein, while the 4 small subunits are PetG, PetL, PetM and PetN. The complex functions as a dimer.

It localises to the cellular thylakoid membrane. Functionally, component of the cytochrome b6-f complex, which mediates electron transfer between photosystem II (PSII) and photosystem I (PSI), cyclic electron flow around PSI, and state transitions. The protein is Cytochrome b6-f complex subunit 8 of Synechococcus sp. (strain CC9311).